The primary structure comprises 147 residues: Hemoglobin subunit gamma (147 aa).

Residues 3 to 147 (HFTAEEKAII…VATALAHKYH (145 aa)) form the Globin domain. Residues histidine 64 and histidine 93 each coordinate heme b.

This sequence belongs to the globin family. As to quaternary structure, heterotetramer of two alpha chains and two gamma chains in fetal hemoglobin (Hb F). Red blood cells.

Its function is as follows. Gamma chains make up the fetal hemoglobin F, in combination with alpha chains. The protein is Hemoglobin subunit gamma (HBG) of Otolemur crassicaudatus (Brown greater galago).